Reading from the N-terminus, the 215-residue chain is C-type lectin domain family 4 member D (215 aa).

At 1 to 17 the chain is on the cytoplasmic side; the sequence is MGLEKPQSKLEGGMHPQ. A helical; Signal-anchor for type II membrane protein membrane pass occupies residues 18 to 38; it reads LIPSVIAVVFILLLSVCFIAS. Residues 39–215 are Extracellular-facing; it reads CLVTHHNFSR…ICKIPGTTLN (177 aa). A glycan (N-linked (GlcNAc...) asparagine) is linked at Asn-45. Cys-84 and Cys-95 are disulfide-bonded. The 118-residue stretch at 91–208 folds into the C-type lectin domain; the sequence is FQSNCYFPLT…CNFEASRICK (118 aa). N-linked (GlcNAc...) asparagine glycosylation is found at Asn-102 and Asn-111. 2 cysteine pairs are disulfide-bonded: Cys-112–Cys-207 and Cys-182–Cys-199. Glu-173, Asp-175, Asn-195, and Asp-196 together coordinate Ca(2+).

Heterodimer with CLEC4E; disulfide-linked. CLEC4E acts as a bridge for interaction between CLEC4D and FCER1G to form a functional complex. Heterodimer with CLEC6A; this heterodimer forms a pattern recognition receptor (PRR) against fungal infection. In terms of tissue distribution, expressed weakly in peripheral blood leukocytes, bone marrow and spleen. Expression is confined mostly in monocytes and macrophage and seems to be up-regulated by IL-6, IL-10, TNF-alpha and IFN-gamma.

The protein resides in the cell membrane. Functionally, calcium-dependent lectin that acts as a pattern recognition receptor (PRR) of the innate immune system: recognizes damage-associated molecular patterns (DAMPs) of pathogen-associated molecular patterns (PAMPs) of bacteria and fungi. The PAMPs include alpha-mannans on C.albicans hypheas and mycobacterial trehalose 6,6'-dimycolate (TDM). Interacts with signaling adapter Fc receptor gamma chain/FCER1G, likely via CLEC4E, to form a functional complex in myeloid cells. Binding of mycobacterial TDM or C.albicans alpha-mannans to this receptor complex leads to phosphorylation of the immunoreceptor tyrosine-based activation motif (ITAM) of FCER1G, triggering activation of SYK, CARD9 and NF-kappa-B, consequently driving maturation of antigen-presenting cells and shaping antigen-specific priming of T-cells toward effector T-helper 1 and T-helper 17 cell subtypes. The heterodimer formed with CLEC6A is active against fungal infection. Functions as an endocytic receptor. May be involved in antigen uptake at the site of infection, either for clearance of the antigen, or for processing and further presentation to T-cells. This chain is C-type lectin domain family 4 member D, found in Homo sapiens (Human).